The primary structure comprises 140 residues: Lymphocyte antigen 6H (140 aa).

The signal sequence occupies residues 1-25 (MLPAAMKGLGLALLAVLLCSAPAHG). One can recognise a UPAR/Ly6 domain in the interval 26–91 (LWCQDCTLTT…RHFFSDYLMG (66 aa)). Cystine bridges form between Cys-28/Cys-52, Cys-31/Cys-40, Cys-45/Cys-73, and Cys-77/Cys-104. N-linked (GlcNAc...) asparagine glycosylation occurs at Asn-36. Gly-115 carries GPI-anchor amidated glycine lipidation. Positions 116-140 (AGHSPWALAGGLLLSLGPALLWAGP) are cleaved as a propeptide — removed in mature form.

As to quaternary structure, interacts with CHRNA4 and CHRNA7.

Its subcellular location is the cell membrane. Its function is as follows. Believed to act as a modulator of nicotinic acetylcholine receptors (nAChRs) activity. In vitro inhibits alpha-3:beta-4-containing nAChRs maximum response. May play a role in the intracellular trafficking of alpha-7-containing nAChRs and may inhibit their expression at the cell surface. Seems to inhibit alpha-7/CHRNA7 signaling in hippocampal neurons. The protein is Lymphocyte antigen 6H (LY6H) of Macaca fascicularis (Crab-eating macaque).